Here is a 179-residue protein sequence, read N- to C-terminus: Segregation and condensation protein B (179 aa).

It belongs to the ScpB family. As to quaternary structure, homodimer. Homodimerization may be required to stabilize the binding of ScpA to the Smc head domains. Component of a cohesin-like complex composed of ScpA, ScpB and the Smc homodimer, in which ScpA and ScpB bind to the head domain of Smc. The presence of the three proteins is required for the association of the complex with DNA.

Its subcellular location is the cytoplasm. Its function is as follows. Participates in chromosomal partition during cell division. May act via the formation of a condensin-like complex containing Smc and ScpA that pull DNA away from mid-cell into both cell halves. In Clostridioides difficile (strain 630) (Peptoclostridium difficile), this protein is Segregation and condensation protein B.